A 479-amino-acid chain; its full sequence is tRNA-2-methylthio-N(6)-dimethylallyladenosine synthase (479 aa).

The 118-residue stretch at 3 to 120 folds into the MTTase N-terminal domain; it reads KKLYIKTWGC…LPEMVNQVSE (118 aa). [4Fe-4S] cluster contacts are provided by Cys-12, Cys-49, Cys-83, Cys-157, Cys-161, and Cys-164. In terms of domain architecture, Radical SAM core spans 143 to 375; sequence KADGASAFVS…QQRLNQQSMA (233 aa). One can recognise a TRAM domain in the interval 378 to 441; it reads RRMLETEQRI…PNSLRGELIR (64 aa).

Belongs to the methylthiotransferase family. MiaB subfamily. Monomer. [4Fe-4S] cluster serves as cofactor.

It is found in the cytoplasm. The catalysed reaction is N(6)-dimethylallyladenosine(37) in tRNA + (sulfur carrier)-SH + AH2 + 2 S-adenosyl-L-methionine = 2-methylsulfanyl-N(6)-dimethylallyladenosine(37) in tRNA + (sulfur carrier)-H + 5'-deoxyadenosine + L-methionine + A + S-adenosyl-L-homocysteine + 2 H(+). In terms of biological role, catalyzes the methylthiolation of N6-(dimethylallyl)adenosine (i(6)A), leading to the formation of 2-methylthio-N6-(dimethylallyl)adenosine (ms(2)i(6)A) at position 37 in tRNAs that read codons beginning with uridine. The chain is tRNA-2-methylthio-N(6)-dimethylallyladenosine synthase from Idiomarina loihiensis (strain ATCC BAA-735 / DSM 15497 / L2-TR).